We begin with the raw amino-acid sequence, 499 residues long: Trichothecene C-4 hydroxylase (499 aa).

Residues 7-29 (VGVAVQLVLTVLLASIPLRVIWN) traverse the membrane as a helical segment. N-linked (GlcNAc...) asparagine glycans are attached at residues N173 and N287. C442 contributes to the heme binding site. An N-linked (GlcNAc...) asparagine glycan is attached at N473.

Belongs to the cytochrome P450 family. Heme serves as cofactor.

It localises to the membrane. It participates in sesquiterpene biosynthesis; trichothecene biosynthesis. In terms of biological role, trichothecene C-4 hydroxylase; part of the gene cluster that mediates the production of the antimicrobial trichothecene harzianum A (HA) that plays a role in Botrytis cinerea antagonistic activity and plant defense priming. The biosynthesis of harzianum A begins with the cyclization of farnesyl diphosphate to trichodiene and is catalyzed by the trichodiene synthase TRI5. Trichodiene undergoes a series of oxygenations catalyzed by the cytochrome P450 monooxygenase TRI4. TRI4 controls the addition of 3 oxygens at C-2, C-11, and the C-12, C-13-epoxide to form the intermediate isotrichodiol. Isotrichodiol then undergoes a non-enzymatic isomerization and cyclization to form 12,13-epoxytrichothec-9-ene (EPT) which is further converted to trichodermol by the cytochrome P450 monooxygenase TRI11 via C-4 hydroxylation. The last step of HA synthesis is esterification of an octatriendioyl moiety to the C-4 oxygen of trichodermol. The octatriendioyl moiety is probably produced by the polyketide synthase TRI17 and the esterification performed by the trichothecene O-acetyltransferase TRI3. This is Trichothecene C-4 hydroxylase from Trichoderma arundinaceum.